The chain runs to 498 residues: Glycerol kinase (498 aa).

ADP is bound at residue Thr-14. Positions 14, 15, and 16 each coordinate ATP. Thr-14 is a sn-glycerol 3-phosphate binding site. Position 18 (Arg-18) interacts with ADP. Sn-glycerol 3-phosphate is bound by residues Arg-84, Glu-85, and Tyr-136. Positions 84, 85, and 136 each coordinate glycerol. Position 232 is a phosphohistidine; by HPr (His-232). Asp-246 is a sn-glycerol 3-phosphate binding site. Residues Asp-246 and Gln-247 each coordinate glycerol. The ADP site is built by Thr-268 and Gly-311. ATP contacts are provided by Thr-268, Gly-311, Gln-315, and Gly-412. ADP is bound by residues Gly-412 and Asn-416.

The protein belongs to the FGGY kinase family. As to quaternary structure, homotetramer and homodimer (in equilibrium). In terms of processing, the phosphoenolpyruvate-dependent sugar phosphotransferase system (PTS), including enzyme I, and histidine-containing protein (HPr) are required for the phosphorylation, which leads to the activation of the enzyme.

The catalysed reaction is glycerol + ATP = sn-glycerol 3-phosphate + ADP + H(+). The protein operates within polyol metabolism; glycerol degradation via glycerol kinase pathway; sn-glycerol 3-phosphate from glycerol: step 1/1. Activated by phosphorylation and inhibited by fructose 1,6-bisphosphate (FBP). Key enzyme in the regulation of glycerol uptake and metabolism. Catalyzes the phosphorylation of glycerol to yield sn-glycerol 3-phosphate. This chain is Glycerol kinase, found in Lactococcus lactis subsp. lactis (strain IL1403) (Streptococcus lactis).